Here is a 339-residue protein sequence, read N- to C-terminus: Fructose-1,6-bisphosphatase class 1 (339 aa).

Positions 92, 114, 116, and 117 each coordinate Mg(2+). Substrate contacts are provided by residues 117–120 (DGSS), Asn209, and Lys275. Mg(2+) is bound at residue Glu281.

Belongs to the FBPase class 1 family. Homotetramer. Mg(2+) is required as a cofactor.

It is found in the cytoplasm. It catalyses the reaction beta-D-fructose 1,6-bisphosphate + H2O = beta-D-fructose 6-phosphate + phosphate. It participates in carbohydrate biosynthesis; gluconeogenesis. The chain is Fructose-1,6-bisphosphatase class 1 from Acidithiobacillus ferrooxidans (strain ATCC 53993 / BNL-5-31) (Leptospirillum ferrooxidans (ATCC 53993)).